We begin with the raw amino-acid sequence, 135 residues long: Transcriptional activator protein (135 aa).

The short motif at 17 to 32 (KAQHKVAKKRAIRRSR) is the Nuclear localization signal element. Residues 37 to 54 (CGCSYYIHINCRNYGFSH) fold into a zinc finger. Residues 82 to 102 (AAPSNSSRVPDVCDPNTDNVQ) are disordered. The transactivation stretch occupies residues 120-135 (ALPLFDGDFWDDIIDF).

It belongs to the geminiviridae transcriptional activator protein family. As to quaternary structure, monomer. Homodimer. Homooligomer. Self-interaction correlates with nuclear localization and efficient activation of transcription. Monomers suppress local silencing by interacting with and inactivating host adenosine kinase 2 (ADK2) in the cytoplasm. Interacts with and inhibits host SNF1 kinase. Binds to ssDNA. Post-translationally, phosphorylated.

The protein localises to the host nucleus. It localises to the host cytoplasm. In terms of biological role, strong activator of the late viral genes promoters. Enhances the expression of the capsid protein and nuclear shuttle protein. Acts as a suppressor of RNA-mediated gene silencing, also known as post-transcriptional gene silencing (PTGS), a mechanism of plant viral defense that limits the accumulation of viral RNAs. Suppresses the host RNA silencing by inhibiting adenosine kinase 2 (ADK2), a kinase involved in a general methylation pathway. Also suppresses the host basal defense by interacting with and inhibiting SNF1 kinase, a key regulator of cell metabolism implicated in innate antiviral defense. Determines pathogenicity. This is Transcriptional activator protein from Mungbean yellow mosaic virus (strain Vigna) (MYMV).